Here is a 128-residue protein sequence, read N- to C-terminus: Large ribosomal subunit protein eL22 (128 aa).

Belongs to the eukaryotic ribosomal protein eL22 family. As to quaternary structure, component of the large ribosomal subunit.

It localises to the cytoplasm. Its function is as follows. Component of the large ribosomal subunit. The ribosome is a large ribonucleoprotein complex responsible for the synthesis of proteins in the cell. This chain is Large ribosomal subunit protein eL22 (rpl22), found in Ictalurus punctatus (Channel catfish).